Consider the following 283-residue polypeptide: 4-diphosphocytidyl-2-C-methyl-D-erythritol kinase (283 aa).

Lys-13 is an active-site residue. 96-106 (PMGGGIGGGSS) contributes to the ATP binding site. Asp-138 is a catalytic residue.

The protein belongs to the GHMP kinase family. IspE subfamily.

The catalysed reaction is 4-CDP-2-C-methyl-D-erythritol + ATP = 4-CDP-2-C-methyl-D-erythritol 2-phosphate + ADP + H(+). It participates in isoprenoid biosynthesis; isopentenyl diphosphate biosynthesis via DXP pathway; isopentenyl diphosphate from 1-deoxy-D-xylulose 5-phosphate: step 3/6. Catalyzes the phosphorylation of the position 2 hydroxy group of 4-diphosphocytidyl-2C-methyl-D-erythritol. The sequence is that of 4-diphosphocytidyl-2-C-methyl-D-erythritol kinase from Pseudomonas fluorescens (strain SBW25).